Consider the following 188-residue polypeptide: Elongation factor P (188 aa).

The protein belongs to the elongation factor P family.

The protein localises to the cytoplasm. It participates in protein biosynthesis; polypeptide chain elongation. Functionally, involved in peptide bond synthesis. Stimulates efficient translation and peptide-bond synthesis on native or reconstituted 70S ribosomes in vitro. Probably functions indirectly by altering the affinity of the ribosome for aminoacyl-tRNA, thus increasing their reactivity as acceptors for peptidyl transferase. The protein is Elongation factor P of Nitrosospira multiformis (strain ATCC 25196 / NCIMB 11849 / C 71).